The chain runs to 613 residues: Pentatricopeptide repeat-containing protein At2g45350, chloroplastic (613 aa).

13 PPR repeats span residues 85 to 119, 120 to 154, 155 to 185, 186 to 216, 219 to 250, 251 to 285, 286 to 312, 313 to 347, 349 to 383, 384 to 414, 415 to 449, 450 to 480, and 486 to 516; these read DPFL…GVSV, DKFS…GLWS, DLFL…MPKR, DSVS…MPME, NLIS…MPEK, DLIS…DVVT, WATM…MPHR, DVVA…SHLL, DDTT…QFYL, GGKL…IENK, SIDH…SLKP, DDIT…MRRK, and RLQH…MPVE. Residues 521–596 are type E motif; that stretch reads IWRTFLTACS…IPGCSWIELD (76 aa).

Belongs to the PPR family. PCMP-E subfamily. As to quaternary structure, interacts with DYW1.

It localises to the plastid. The protein resides in the chloroplast. In terms of biological role, plays a major role in chloroplast RNA editing. Acts as a site-recognition transacting factor to recruit C-deaminase. Involved in single RNA editing events. Required for the edition of the site 1 of ndhD (ndhD-1 site corresponding to cytidine-2), which is a plastid-encoded subunit of the NADH-plastoquinone oxidoreductase. The interaction with DYW1 is required for its function in editing the ndhD-1 site. The sequence is that of Pentatricopeptide repeat-containing protein At2g45350, chloroplastic (CRR4) from Arabidopsis thaliana (Mouse-ear cress).